Here is a 206-residue protein sequence, read N- to C-terminus: MPSRRRTLLKVIILGDSGVGKTSLMNQYVNKKFSNQYKATIGADFLTKEVQFEDRLFTLQIWDTAGQERFQSLGVAFYRGADCCVLVYDVNSMKSFENLNNWREEFLIQASPSDPENFPFVLIGNKVDVDDGNSRVVSEKKAKAWCASKGNIPYFETSAKVGTNVEEAFQCIAKDALKSGEEEELYLPDTIDVGTSNQQRSTGCEC.

15–23 (GDSGVGKTS) contacts GTP. The Effector region motif lies at 37 to 45 (YKATIGADF). GTP-binding positions include 63 to 67 (DTAGQ), 125 to 128 (NKVD), and 158 to 159 (SA). S-geranylgeranyl cysteine attachment occurs at residues Cys204 and Cys206. Cys206 bears the Cysteine methyl ester mark.

The protein belongs to the small GTPase superfamily. Rab family. Interacts with VPS35A.

The protein resides in the endosome membrane. The protein localises to the vacuole membrane. It localises to the prevacuolar compartment membrane. With respect to regulation, regulated by guanine nucleotide exchange factors (GEFs) which promote the exchange of bound GDP for free GTP. Regulated by the MON1-CCZ1 complex which serves as a link between Rab5 and Rab7 protein families in PVCs and mediates PVC maturation. In terms of biological role, essential for trafficking from prevacuolar compartments to vacuoles. Involved in the trafficking of newly synthesized protein to vacuoles. Essential for plant growth. Participates in the recruitment of the core retromer components to the endosomal membrane by interacting with VPS35A. The sequence is that of Ras-related protein RABG3f (RABG3F) from Arabidopsis thaliana (Mouse-ear cress).